The sequence spans 233 residues: Large ribosomal subunit protein uL1 (233 aa).

Belongs to the universal ribosomal protein uL1 family. Part of the 50S ribosomal subunit.

Functionally, binds directly to 23S rRNA. The L1 stalk is quite mobile in the ribosome, and is involved in E site tRNA release. In terms of biological role, protein L1 is also a translational repressor protein, it controls the translation of the L11 operon by binding to its mRNA. The sequence is that of Large ribosomal subunit protein uL1 from Thermotoga maritima (strain ATCC 43589 / DSM 3109 / JCM 10099 / NBRC 100826 / MSB8).